The sequence spans 163 residues: Small ribosomal subunit protein bS18c (163 aa).

2 disordered regions span residues 1–52 (MYIS…IGPG) and 144–163 (NLRNSNQNLRNNNRNLSSDC). Residues 7-48 (PFRKSKQPFRKSKQPFHKSKQPFRKFKQPFRKSKQPFRRRSR) are compositionally biased toward basic residues.

Belongs to the bacterial ribosomal protein bS18 family. In terms of assembly, part of the 30S ribosomal subunit.

It is found in the plastid. The protein localises to the chloroplast. This is Small ribosomal subunit protein bS18c from Saccharum hybrid (Sugarcane).